We begin with the raw amino-acid sequence, 575 residues long: TOX high mobility group box family member 3 (575 aa).

Disordered stretches follow at residues 189 to 258 (LGGA…QKPV) and 516 to 575 (QQLQ…VSIF). Low complexity predominate over residues 195-214 (SHTSPSPPASKSATPSPSSS). Over residues 222–238 (DANRAIGEKRTAPDSGK) the composition is skewed to basic and acidic residues. A compositionally biased stretch (basic residues) spans 239 to 249 (KPKTPKKKKKK). A DNA-binding region (HMG box) is located at residues 254 to 322 (PQKPVSAYAL…EYLKALAAYR (69 aa)). Over residues 516 to 526 (QQLQHMQHQSQ) the composition is skewed to low complexity. Polar residues predominate over residues 527 to 541 (PSPRQHSPVTSQITS). The span at 548-575 (SPQPASQQHQPQIQSQTQTQVLPQVSIF) shows a compositional bias: low complexity.

In terms of assembly, homodimer. Interacts (via HGM box) with CITED1 (via C-terminus); the interaction increases estrogen-response element (ERE)-dependent transcription and protection against cell death. Interacts with CREB1 (phosphorylated form). Interacts with CREB1; the interaction is not depolarization dependent. Interacts with CREBBP (via C-terminus).

It localises to the nucleus. Its function is as follows. Transcriptional coactivator of the p300/CBP-mediated transcription complex. Activates transactivation through cAMP response element (CRE) sites. Protects against cell death by inducing antiapoptotic and repressing pro-apoptotic transcripts. Stimulates transcription from the estrogen-responsive or BCL-2 promoters. Required for depolarization-induced transcription activation of the C-FOS promoter in neurons. Associates with chromatin to the estrogen-responsive C3 promoter region. The chain is TOX high mobility group box family member 3 (Tox3) from Mus musculus (Mouse).